The chain runs to 258 residues: Small ribosomal subunit protein uS2 (258 aa).

A disordered region spans residues 227–258 (GEQFAPASEQKEEVKTQEVQEVEDSNDDVIDD). Basic and acidic residues predominate over residues 235 to 244 (EQKEEVKTQE). Over residues 246-258 (QEVEDSNDDVIDD) the composition is skewed to acidic residues.

Belongs to the universal ribosomal protein uS2 family.

In Caldicellulosiruptor saccharolyticus (strain ATCC 43494 / DSM 8903 / Tp8T 6331), this protein is Small ribosomal subunit protein uS2.